Reading from the N-terminus, the 172-residue chain is R-phycocyanin-1 beta chain (172 aa).

The residue at position 72 (N72) is an N4-methylasparagine. C82 contributes to the (2R,3E)-phycocyanobilin binding site. Residue C153 participates in (2R,3E)-phycoerythrobilin binding.

Belongs to the phycobiliprotein family. As to quaternary structure, heterodimer of an alpha and a beta chain. Dimers further assemble into trimers and the trimers into hexamers. The basic functional unit of phycobiliproteins is a ring-shaped hexamer formed from two back-to-back trimers contacting via the alpha chain subunits. The trimers are composed of alpha/beta subunit heterodimers arranged around a three-fold axis of symmetry. The phycoerythrins also contain a gamma subunit which is located in the center of the hexamer. Post-translationally, contains two covalently linked bilin chromophores.

It is found in the plastid. The protein resides in the chloroplast thylakoid membrane. Light-harvesting photosynthetic bile pigment-protein from the phycobiliprotein complex (phycobilisome, PBS). Phycocyanin is the major phycobiliprotein in the PBS rod. The chain is R-phycocyanin-1 beta chain (rpcB) from Porphyridium purpureum (Red alga).